The following is a 286-amino-acid chain: ATP synthase gamma chain (286 aa).

The protein belongs to the ATPase gamma chain family. In terms of assembly, F-type ATPases have 2 components, CF(1) - the catalytic core - and CF(0) - the membrane proton channel. CF(1) has five subunits: alpha(3), beta(3), gamma(1), delta(1), epsilon(1). CF(0) has three main subunits: a, b and c.

It localises to the cell inner membrane. In terms of biological role, produces ATP from ADP in the presence of a proton gradient across the membrane. The gamma chain is believed to be important in regulating ATPase activity and the flow of protons through the CF(0) complex. The protein is ATP synthase gamma chain of Shewanella sp. (strain MR-4).